A 335-amino-acid polypeptide reads, in one-letter code: Solute-binding protein Veis_3954 (335 aa).

The N-terminal stretch at methionine 1–alanine 34 is a signal peptide. Residues glutamine 50, glutamate 82, asparagine 155–arginine 158, arginine 179, and asparagine 219 each bind (R)-pantoate.

The protein belongs to the bacterial solute-binding protein 7 family. The complex is comprised of an extracytoplasmic solute-binding protein and a heteromeric permease formed by two transmembrane proteins.

The protein resides in the periplasm. Functionally, solute-binding protein that binds (R)-pantoate and D-erythronate (in vitro). Probably part of a tripartite ATP-independent periplasmic (TRAP) transport system that mediates solute transport into the cytoplasm. In Verminephrobacter eiseniae (strain EF01-2), this protein is Solute-binding protein Veis_3954.